The chain runs to 181 residues: Transcriptional repressor NrdR (181 aa).

A zinc finger spans residues Cys-3–Cys-34. In terms of domain architecture, ATP-cone spans Leu-46 to Asp-136. Positions Ala-148–Arg-181 are disordered.

Belongs to the NrdR family. It depends on Zn(2+) as a cofactor.

Negatively regulates transcription of bacterial ribonucleotide reductase nrd genes and operons by binding to NrdR-boxes. This Frankia casuarinae (strain DSM 45818 / CECT 9043 / HFP020203 / CcI3) protein is Transcriptional repressor NrdR.